Reading from the N-terminus, the 2352-residue chain is Highly reducing polyketide synthase ZEA2 (2352 aa).

The Ketosynthase family 3 (KS3) domain occupies 9–433 (PGPVAIVGLA…GTNGHVVLEA (425 aa)). Catalysis depends on for beta-ketoacyl synthase activity residues cysteine 181, histidine 316, and histidine 356. Positions 544 to 875 (FVFTGQGAQW…LATSLFLQGV (332 aa)) are malonyl-CoA:ACP transacylase (MAT) domain. Serine 634 serves as the catalytic For malonyltransferase activity. The segment at 923-1058 (RSIIGAPVPK…GLITIDYEGN (136 aa)) is N-terminal hotdog fold. Residues 923-1242 (RSIIGAPVPK…TSELEMDGAA (320 aa)) form the PKS/mFAS DH domain. A dehydratase (DH) domain region spans residues 925 to 1237 (IIGAPVPKMN…VIDFRTSELE (313 aa)). Catalysis depends on histidine 955, which acts as the Proton acceptor; for dehydratase activity. The segment at 1086–1242 (PATYAKDRFY…TSELEMDGAA (157 aa)) is C-terminal hotdog fold. The active-site Proton donor; for dehydratase activity is aspartate 1152. Residues 1643 to 1955 (GLLDTLYFVD…QGKHRGKIVL (313 aa)) are enoylreductase (ER) domain. A catalytic ketoreductase (KRc) domain region spans residues 1979-2159 (ATYLFVGGLG…VSVNLGIMRD (181 aa)). The 78-residue stretch at 2269-2346 (KATEIITNAL…SFAGKLASTS (78 aa)) folds into the Carrier domain. Residue serine 2306 is modified to O-(pantetheine 4'-phosphoryl)serine.

Its pathway is mycotoxin biosynthesis. Its function is as follows. Highly reducing polyketide synthase; part of the gene cluster that mediates the biosynthesis of zearalenone (ZEA), a nonsteroid estrogen that is a contaminant of cereal grains and causes estrogenic disorders in humans and animals. The ZEA backbone is synthesized from a single acetyl-CoA molecule and eight malonyl-CoA molecules. The reducing polyketide synthase ZEA2 is proposed to synthesize a reduced hexaketide intermediate by using different combinations of its reductive domains during each round of condensation. The hexaketide thioester is then transacylated to the non-reducing polyketide synthase ZEA1 and is further condensed with three malonyl-CoAs without reductive tailoring to yield a mixed reduced/unreduced nonaketide. ZEA1 must be able to interact with ZEA2 to facilitate starter-unit acyltransfer and initiate polyketide biosynthesis. ZEA1 also mediates the required C2-C7 cyclization to form the resorcylate core and catalyzes the formation of the macrolactone. ZEB1 is then responsible for the chemical conversion of beta-zearalenonol (beta-ZOL) to ZEA in the biosynthetic pathway. This Gibberella zeae (strain ATCC MYA-4620 / CBS 123657 / FGSC 9075 / NRRL 31084 / PH-1) (Wheat head blight fungus) protein is Highly reducing polyketide synthase ZEA2.